Reading from the N-terminus, the 238-residue chain is Aspartate/glutamate leucyltransferase (238 aa).

Belongs to the R-transferase family. Bpt subfamily.

It localises to the cytoplasm. It carries out the reaction N-terminal L-glutamyl-[protein] + L-leucyl-tRNA(Leu) = N-terminal L-leucyl-L-glutamyl-[protein] + tRNA(Leu) + H(+). The catalysed reaction is N-terminal L-aspartyl-[protein] + L-leucyl-tRNA(Leu) = N-terminal L-leucyl-L-aspartyl-[protein] + tRNA(Leu) + H(+). In terms of biological role, functions in the N-end rule pathway of protein degradation where it conjugates Leu from its aminoacyl-tRNA to the N-termini of proteins containing an N-terminal aspartate or glutamate. The protein is Aspartate/glutamate leucyltransferase of Aeromonas salmonicida (strain A449).